Reading from the N-terminus, the 1941-residue chain is WD repeat-containing protein 81 (1941 aa).

Residues 1 to 27 (MAQGSGGREGALRTPAGGWHSPPSPDM) are disordered. Positions 1 to 650 (MAQGSGGREG…TPCEASWTRD (650 aa)) are necessary and sufficient for the interaction with SQSTM1. A BEACH domain is found at 337 to 614 (GQPTGQEELR…IPKLLVQTIQ (278 aa)). Disordered stretches follow at residues 618–637 (GRED…GRPV), 694–718 (VASA…EEGR), 1022–1074 (SKDL…VSFH), 1097–1217 (PQEA…EGKE), 1523–1556 (PSSR…DGHS), and 1569–1602 (QIPN…DNAL). Residues 1137 to 1146 (LRSGDSSQDL) are compositionally biased toward polar residues. Positions 1151 to 1174 (GSEEEEEEEDSCVVLEEEEGEQEE) are enriched in acidic residues. Residues 1586–1595 (SGVGGGGLGS) are compositionally biased toward gly residues. 7 WD repeats span residues 1639–1677 (IRLQ…LWPL), 1686–1724 (ETAP…VWDP), 1729–1769 (TLRT…FVDC), 1777–1815 (EFRL…LLDT), 1819–1856 (LVLR…VWKE), 1860–1896 (KPTH…VCSL), and 1902–1941 (QATT…RLLA).

Belongs to the WD repeat WDR81 family. Interacts with WDR91; involved in early to late endosome cargo transport. Interacts with BECN1; negatively regulates the PI3 kinase/PI3K activity associated with endosomal membranes. Interacts with SQSTM1; the interaction is direct and regulates the interaction of SQSTM1 with ubiquitinated proteins. Interacts with MAP1LC3C; recruits MAP1LC3C to ubiquitinated protein aggregates in the aggrephagy process. In terms of tissue distribution, widely expressed. In the brain, highest levels in cerebellum and corpus callosum.

Its subcellular location is the early endosome membrane. The protein resides in the late endosome membrane. It is found in the lysosome membrane. The protein localises to the cytoplasmic vesicle. It localises to the autophagosome membrane. Its subcellular location is the mitochondrion. The protein resides in the cytoplasm. It is found in the cytosol. In terms of biological role, functions as a negative regulator of the PI3 kinase/PI3K activity associated with endosomal membranes via BECN1, a core subunit of the PI3K complex. By modifying the phosphatidylinositol 3-phosphate/PtdInsP3 content of endosomal membranes may regulate endosome fusion, recycling, sorting and early to late endosome transport. It is for instance, required for the delivery of cargos like BST2/tetherin from early to late endosome and thereby participates indirectly to their degradation by the lysosome. May also play a role in aggrephagy, the macroautophagic degradation of ubiquitinated protein aggregates. In this process, may regulate the interaction of SQSTM1 with ubiquitinated proteins and also recruit MAP1LC3C. May also be involved in maintenance of normal mitochondrial structure and organization. The sequence is that of WD repeat-containing protein 81 from Homo sapiens (Human).